The following is a 160-amino-acid chain: Cyclic pyranopterin monophosphate synthase (160 aa).

Substrate contacts are provided by residues 75-77 (LCH) and 113-114 (ME). Asp-128 is a catalytic residue.

This sequence belongs to the MoaC family. Homohexamer; trimer of dimers.

It catalyses the reaction (8S)-3',8-cyclo-7,8-dihydroguanosine 5'-triphosphate = cyclic pyranopterin phosphate + diphosphate. It participates in cofactor biosynthesis; molybdopterin biosynthesis. Functionally, catalyzes the conversion of (8S)-3',8-cyclo-7,8-dihydroguanosine 5'-triphosphate to cyclic pyranopterin monophosphate (cPMP). This chain is Cyclic pyranopterin monophosphate synthase, found in Ruthia magnifica subsp. Calyptogena magnifica.